The following is a 185-amino-acid chain: Serine/arginine-rich splicing factor RSZ21 (185 aa).

An RRM domain is found at 2 to 73 (ARLYVGNLDP…WRVELSRNSS (72 aa)). The CCHC-type zinc finger occupies 86–103 (MKCYECGETGHFARECRL). A disordered region spans residues 104–185 (RIGPGGLGSG…DGGRYRRSRS (82 aa)). The span at 113–123 (GKRRSRSRSRS) shows a compositional bias: basic residues. Low complexity-rich tracts occupy residues 124–138 (RSPQYRKSPTYGRRS) and 151–162 (VSPVRGRSYSRS).

It belongs to the splicing factor SR family. Extensively phosphorylated on serine residues in the RS domain. As to expression, expressed in roots, leaves and immature seeds.

It is found in the nucleus. Its function is as follows. Involved in pre-mRNA splicing. The protein is Serine/arginine-rich splicing factor RSZ21 (RSZP21) of Oryza sativa subsp. japonica (Rice).